An 822-amino-acid chain; its full sequence is AP-1 complex subunit gamma-1 (822 aa).

Residues 597–628 (EIVQTNGETEPAPLETKPPPSGPQPTSQANDL) are disordered. In terms of domain architecture, GAE spans 702–817 (AGIPSITAYS…QDLAEVNNFP (116 aa)).

It belongs to the adaptor complexes large subunit family. As to quaternary structure, adaptor protein complex 1 (AP-1) is a heterotetramer composed of two large adaptins (gamma-type subunit AP1G1 and beta-type subunit AP1B1), a medium adaptin (mu-type subunit AP1M1 or AP1M2) and a small adaptin (sigma-type subunit AP1S1 or AP1S2 or AP1S3). Interacts (via GAE domain) with RABEP1. Interacts with EPS15. Interacts with SYNRG/gamma-synergin. Interacts (via GAE domain) with AP1AR (via coiled-coil domain). Interacts with CLN3 (via dileucine motif); this interaction facilitates lysosomal targeting. Interacts (via GAE domain) with AFTPH/aftiphilin; the interaction is required to recruit AFTPH/aftiphilin to the perinuclear region of the cell.

It localises to the golgi apparatus. It is found in the cytoplasmic vesicle. The protein resides in the clathrin-coated vesicle membrane. The protein localises to the cytoplasm. Its subcellular location is the perinuclear region. It localises to the clathrin-coated vesicle. It is found in the membrane. The protein resides in the clathrin-coated pit. Subunit of clathrin-associated adaptor protein complex 1 that plays a role in protein sorting in the late-Golgi/trans-Golgi network (TGN) and/or endosomes. The AP complexes mediate both the recruitment of clathrin to membranes and the recognition of sorting signals within the cytosolic tails of transmembrane cargo molecules. In association with AFTPH/aftiphilin in the aftiphilin/p200/gamma-synergin complex, involved in the trafficking of transferrin from early to recycling endosomes, and the membrane trafficking of furin and the lysosomal enzyme cathepsin D between the trans-Golgi network (TGN) and endosomes. The protein is AP-1 complex subunit gamma-1 (AP1G1) of Pongo abelii (Sumatran orangutan).